An 82-amino-acid chain; its full sequence is Large ribosomal subunit protein bL28 (82 aa).

The protein belongs to the bacterial ribosomal protein bL28 family.

The sequence is that of Large ribosomal subunit protein bL28 from Vesicomyosocius okutanii subsp. Calyptogena okutanii (strain HA).